Reading from the N-terminus, the 469-residue chain is RuvB-like helicase 2 (469 aa).

ATP is bound at residue 74–81; the sequence is GPPSTGKT.

The protein belongs to the RuvB family. May form heterododecamers with RVB1. Component of the SWR1 chromatin remodeling complex, the INO80 chromatin remodeling complex, and of the R2TP complex.

It localises to the nucleus. The catalysed reaction is ATP + H2O = ADP + phosphate + H(+). In terms of biological role, DNA helicase which participates in several chromatin remodeling complexes, including the SWR1 and the INO80 complexes. The SWR1 complex mediates the ATP-dependent exchange of histone H2A for the H2A variant HZT1 leading to transcriptional regulation of selected genes by chromatin remodeling. The INO80 complex remodels chromatin by shifting nucleosomes and is involved in DNA repair. Also involved in pre-rRNA processing. This chain is RuvB-like helicase 2 (RVB2), found in Eremothecium gossypii (strain ATCC 10895 / CBS 109.51 / FGSC 9923 / NRRL Y-1056) (Yeast).